Consider the following 395-residue polypeptide: Dual specificity protein phosphatase 4 (395 aa).

Residue Val-2 is modified to N-acetylvaline. The region spanning Ser-42–Ser-160 is the Rhodanese domain. The 142-residue stretch at Gly-196–Thr-337 folds into the Tyrosine-protein phosphatase domain. Cys-281 acts as the Phosphocysteine intermediate in catalysis. Phosphoserine; by MAPK occurs at positions 387 and 392.

It belongs to the protein-tyrosine phosphatase family. Non-receptor class dual specificity subfamily. As to quaternary structure, hollow spherical complex composed of 24 subunits with pseudooctahedral symmetry, has a tetramer as the basic unit. In terms of processing, phosphorylation in the C-terminus by ERK1/2 inhibits proteasomal degradation and stabilizes the protein. In terms of tissue distribution, expressed at moderate levels in nearly all tissues and cells including brain, spleen, and testes with the higher expression in the heart and lung and lower expression in skeletal muscle and kidney. Undetectable in liver. Expressed in many areas of the brain with very strong expression in the hippocampus, piriform cortex, and the suprachiasmatic nucleus.

The protein localises to the nucleus. The catalysed reaction is O-phospho-L-tyrosyl-[protein] + H2O = L-tyrosyl-[protein] + phosphate. It catalyses the reaction O-phospho-L-seryl-[protein] + H2O = L-seryl-[protein] + phosphate. The enzyme catalyses O-phospho-L-threonyl-[protein] + H2O = L-threonyl-[protein] + phosphate. Its function is as follows. Regulates mitogenic signal transduction by dephosphorylating both Thr and Tyr residues on MAP kinases ERK1 and ERK2. This chain is Dual specificity protein phosphatase 4 (Dusp4), found in Rattus norvegicus (Rat).